Here is a 372-residue protein sequence, read N- to C-terminus: Cobalt-precorrin-5B C(1)-methyltransferase (372 aa).

It belongs to the CbiD family.

The enzyme catalyses Co-precorrin-5B + S-adenosyl-L-methionine = Co-precorrin-6A + S-adenosyl-L-homocysteine. The protein operates within cofactor biosynthesis; adenosylcobalamin biosynthesis; cob(II)yrinate a,c-diamide from sirohydrochlorin (anaerobic route): step 6/10. Catalyzes the methylation of C-1 in cobalt-precorrin-5B to form cobalt-precorrin-6A. This Prochlorococcus marinus subsp. pastoris (strain CCMP1986 / NIES-2087 / MED4) protein is Cobalt-precorrin-5B C(1)-methyltransferase.